The chain runs to 125 residues: uncharacterized protein (125 aa).

The PRD domain maps to 15-121; sequence QINQSIIDVI…HSLVLEQKQL (107 aa).

This is an uncharacterized protein from Haemophilus influenzae (strain ATCC 51907 / DSM 11121 / KW20 / Rd).